Reading from the N-terminus, the 194-residue chain is Small ribosomal subunit protein uS4c (194 aa).

The 62-residue stretch at 82–143 folds into the S4 RNA-binding domain; sequence MRLDNILFRL…KQRSKALIQD (62 aa).

The protein belongs to the universal ribosomal protein uS4 family. As to quaternary structure, part of the 30S ribosomal subunit. Contacts protein S5. The interaction surface between S4 and S5 is involved in control of translational fidelity.

The protein resides in the plastid. It localises to the chloroplast. One of the primary rRNA binding proteins, it binds directly to 16S rRNA where it nucleates assembly of the body of the 30S subunit. Its function is as follows. With S5 and S12 plays an important role in translational accuracy. The sequence is that of Small ribosomal subunit protein uS4c (rps4) from Bobartia gladiata (Sword rush-lily).